Consider the following 211-residue polypeptide: ATP phosphoribosyltransferase (211 aa).

It belongs to the ATP phosphoribosyltransferase family. Short subfamily. Heteromultimer composed of HisG and HisZ subunits.

It is found in the cytoplasm. The catalysed reaction is 1-(5-phospho-beta-D-ribosyl)-ATP + diphosphate = 5-phospho-alpha-D-ribose 1-diphosphate + ATP. It functions in the pathway amino-acid biosynthesis; L-histidine biosynthesis; L-histidine from 5-phospho-alpha-D-ribose 1-diphosphate: step 1/9. Functionally, catalyzes the condensation of ATP and 5-phosphoribose 1-diphosphate to form N'-(5'-phosphoribosyl)-ATP (PR-ATP). Has a crucial role in the pathway because the rate of histidine biosynthesis seems to be controlled primarily by regulation of HisG enzymatic activity. This is ATP phosphoribosyltransferase from Pseudomonas putida (strain ATCC 47054 / DSM 6125 / CFBP 8728 / NCIMB 11950 / KT2440).